Here is a 1286-residue protein sequence, read N- to C-terminus: 5-oxoprolinase (1286 aa).

Phosphoserine occurs at positions 930 and 1077.

The protein belongs to the oxoprolinase family. As to quaternary structure, homodimer.

The protein localises to the cytoplasm. The enzyme catalyses 5-oxo-L-proline + ATP + 2 H2O = L-glutamate + ADP + phosphate + H(+). In terms of biological role, catalyzes the cleavage of 5-oxo-L-proline to form L-glutamate coupled to the hydrolysis of ATP to ADP and inorganic phosphate. In Saccharomyces cerevisiae (strain ATCC 204508 / S288c) (Baker's yeast), this protein is 5-oxoprolinase (OXP1).